A 684-amino-acid polypeptide reads, in one-letter code: ATP-dependent zinc metalloprotease FtsH (684 aa).

Topologically, residues Met1 to Arg21 are cytoplasmic. The helical transmembrane segment at Phe22–Asn42 threads the bilayer. At Asp43–Ala138 the chain is on the periplasmic side. A helical transmembrane segment spans residues Ile139 to Leu159. Over Met160–Ala684 the chain is Cytoplasmic. An ATP-binding site is contributed by Gly236–Thr243. Position 459 (His459) interacts with Zn(2+). Glu460 is an active-site residue. Residues His463 and Asp534 each coordinate Zn(2+). Basic and acidic residues predominate over residues Glu647 to Glu662. Residues Glu647–Ala684 are disordered.

In the central section; belongs to the AAA ATPase family. The protein in the C-terminal section; belongs to the peptidase M41 family. Homohexamer. The cofactor is Zn(2+).

Its subcellular location is the cell inner membrane. In terms of biological role, acts as a processive, ATP-dependent zinc metallopeptidase for both cytoplasmic and membrane proteins. Plays a role in the quality control of integral membrane proteins. This is ATP-dependent zinc metalloprotease FtsH from Parabacteroides distasonis (strain ATCC 8503 / DSM 20701 / CIP 104284 / JCM 5825 / NCTC 11152).